The sequence spans 887 residues: Alanine--tRNA ligase (887 aa).

Zn(2+) contacts are provided by H581, H585, C683, and H687.

It belongs to the class-II aminoacyl-tRNA synthetase family. The cofactor is Zn(2+).

Its subcellular location is the cytoplasm. It carries out the reaction tRNA(Ala) + L-alanine + ATP = L-alanyl-tRNA(Ala) + AMP + diphosphate. Catalyzes the attachment of alanine to tRNA(Ala) in a two-step reaction: alanine is first activated by ATP to form Ala-AMP and then transferred to the acceptor end of tRNA(Ala). Also edits incorrectly charged Ser-tRNA(Ala) and Gly-tRNA(Ala) via its editing domain. This chain is Alanine--tRNA ligase, found in Ehrlichia ruminantium (strain Welgevonden).